A 274-amino-acid polypeptide reads, in one-letter code: ATP synthase subunit delta (274 aa).

It belongs to the ATPase delta chain family. F-type ATPases have 2 components, F(1) - the catalytic core - and F(0) - the membrane proton channel. F(1) has five subunits: alpha(3), beta(3), gamma(1), delta(1), epsilon(1). F(0) has three main subunits: a(1), b(2) and c(10-14). The alpha and beta chains form an alternating ring which encloses part of the gamma chain. F(1) is attached to F(0) by a central stalk formed by the gamma and epsilon chains, while a peripheral stalk is formed by the delta and b chains.

Its subcellular location is the cell membrane. In terms of biological role, f(1)F(0) ATP synthase produces ATP from ADP in the presence of a proton or sodium gradient. F-type ATPases consist of two structural domains, F(1) containing the extramembraneous catalytic core and F(0) containing the membrane proton channel, linked together by a central stalk and a peripheral stalk. During catalysis, ATP synthesis in the catalytic domain of F(1) is coupled via a rotary mechanism of the central stalk subunits to proton translocation. This protein is part of the stalk that links CF(0) to CF(1). It either transmits conformational changes from CF(0) to CF(1) or is implicated in proton conduction. The polypeptide is ATP synthase subunit delta (Acidothermus cellulolyticus (strain ATCC 43068 / DSM 8971 / 11B)).